We begin with the raw amino-acid sequence, 649 residues long: DNA mismatch repair protein MutL (649 aa).

The protein belongs to the DNA mismatch repair MutL/HexB family.

Its function is as follows. This protein is involved in the repair of mismatches in DNA. It is required for dam-dependent methyl-directed DNA mismatch repair. May act as a 'molecular matchmaker', a protein that promotes the formation of a stable complex between two or more DNA-binding proteins in an ATP-dependent manner without itself being part of a final effector complex. This is DNA mismatch repair protein MutL from Streptococcus pneumoniae serotype 2 (strain D39 / NCTC 7466).